The sequence spans 409 residues: MQAPAGLAVKAPLIANSDLMSGKPSLIGLTREEMGEALAEIGVPQKQVKMRVSQLWNWLYVRGVSDFDNMTNVAKELREKLKAAFTIARPEIVEEQISNDGTRKWLMRFPPRGAGRPVEIETVYIPEEGRGTLCISSQVGCSLTCSFCHTGTQRLVRNLTAEEILSQLLLARDRLGDFPDGSTPVGAYVPSEGRKVSNIVMMGMGEPLYNFEHVKTALLIATDGDGLSLSKRRVTLSTSGVVPEIFRTGDEIGVMLAISLHAVRDDLRDMLVPINKKYPLKELIEACRNYPGVSNARRITFEYVMLKDVNDSLEDAKMLVQLLKGVPAKINLIPFNPWPGTNYQCSEWAQIEKFADFINQAGYASPIRTPRGRDILAACGQLKSESERMRKTERLAFEAMMIANHGADD.

E121 serves as the catalytic Proton acceptor. A Radical SAM core domain is found at 127-376 (EEGRGTLCIS…IRTPRGRDIL (250 aa)). An intrachain disulfide couples C134 to C379. The [4Fe-4S] cluster site is built by C141, C145, and C148. Residues 205-206 (GE), S237, 259-261 (SLH), and N336 contribute to the S-adenosyl-L-methionine site. The active-site S-methylcysteine intermediate is C379.

It belongs to the radical SAM superfamily. RlmN family. [4Fe-4S] cluster serves as cofactor.

The protein resides in the cytoplasm. The enzyme catalyses adenosine(2503) in 23S rRNA + 2 reduced [2Fe-2S]-[ferredoxin] + 2 S-adenosyl-L-methionine = 2-methyladenosine(2503) in 23S rRNA + 5'-deoxyadenosine + L-methionine + 2 oxidized [2Fe-2S]-[ferredoxin] + S-adenosyl-L-homocysteine. It carries out the reaction adenosine(37) in tRNA + 2 reduced [2Fe-2S]-[ferredoxin] + 2 S-adenosyl-L-methionine = 2-methyladenosine(37) in tRNA + 5'-deoxyadenosine + L-methionine + 2 oxidized [2Fe-2S]-[ferredoxin] + S-adenosyl-L-homocysteine. Specifically methylates position 2 of adenine 2503 in 23S rRNA and position 2 of adenine 37 in tRNAs. m2A2503 modification seems to play a crucial role in the proofreading step occurring at the peptidyl transferase center and thus would serve to optimize ribosomal fidelity. The polypeptide is Dual-specificity RNA methyltransferase RlmN (Agrobacterium fabrum (strain C58 / ATCC 33970) (Agrobacterium tumefaciens (strain C58))).